Here is a 334-residue protein sequence, read N- to C-terminus: Holliday junction branch migration complex subunit RuvB (334 aa).

The large ATPase domain (RuvB-L) stretch occupies residues Ala-4–Tyr-184. Residues Ile-23, Arg-24, Gly-65, Lys-68, Thr-69, Thr-70, Glu-131 to Tyr-133, Arg-174, Tyr-184, and Arg-221 contribute to the ATP site. A Mg(2+)-binding site is contributed by Thr-69. Residues Pro-185–Asn-255 are small ATPAse domain (RuvB-S). Residues Ala-258 to Glu-334 are head domain (RuvB-H). DNA is bound by residues Arg-294, Arg-313, and Arg-318.

This sequence belongs to the RuvB family. As to quaternary structure, homohexamer. Forms an RuvA(8)-RuvB(12)-Holliday junction (HJ) complex. HJ DNA is sandwiched between 2 RuvA tetramers; dsDNA enters through RuvA and exits via RuvB. An RuvB hexamer assembles on each DNA strand where it exits the tetramer. Each RuvB hexamer is contacted by two RuvA subunits (via domain III) on 2 adjacent RuvB subunits; this complex drives branch migration. In the full resolvosome a probable DNA-RuvA(4)-RuvB(12)-RuvC(2) complex forms which resolves the HJ.

The protein resides in the cytoplasm. It catalyses the reaction ATP + H2O = ADP + phosphate + H(+). The RuvA-RuvB-RuvC complex processes Holliday junction (HJ) DNA during genetic recombination and DNA repair, while the RuvA-RuvB complex plays an important role in the rescue of blocked DNA replication forks via replication fork reversal (RFR). RuvA specifically binds to HJ cruciform DNA, conferring on it an open structure. The RuvB hexamer acts as an ATP-dependent pump, pulling dsDNA into and through the RuvAB complex. RuvB forms 2 homohexamers on either side of HJ DNA bound by 1 or 2 RuvA tetramers; 4 subunits per hexamer contact DNA at a time. Coordinated motions by a converter formed by DNA-disengaged RuvB subunits stimulates ATP hydrolysis and nucleotide exchange. Immobilization of the converter enables RuvB to convert the ATP-contained energy into a lever motion, pulling 2 nucleotides of DNA out of the RuvA tetramer per ATP hydrolyzed, thus driving DNA branch migration. The RuvB motors rotate together with the DNA substrate, which together with the progressing nucleotide cycle form the mechanistic basis for DNA recombination by continuous HJ branch migration. Branch migration allows RuvC to scan DNA until it finds its consensus sequence, where it cleaves and resolves cruciform DNA. The sequence is that of Holliday junction branch migration complex subunit RuvB from Yersinia pestis bv. Antiqua (strain Angola).